We begin with the raw amino-acid sequence, 188 residues long: Elongation factor P (188 aa).

This sequence belongs to the elongation factor P family.

It localises to the cytoplasm. The protein operates within protein biosynthesis; polypeptide chain elongation. Functionally, involved in peptide bond synthesis. Stimulates efficient translation and peptide-bond synthesis on native or reconstituted 70S ribosomes in vitro. Probably functions indirectly by altering the affinity of the ribosome for aminoacyl-tRNA, thus increasing their reactivity as acceptors for peptidyl transferase. The protein is Elongation factor P of Wolbachia pipientis subsp. Culex pipiens (strain wPip).